The chain runs to 367 residues: Ferrochelatase (367 aa).

Residues histidine 213 and glutamate 294 each coordinate Fe cation.

This sequence belongs to the ferrochelatase family.

Its subcellular location is the cytoplasm. It catalyses the reaction heme b + 2 H(+) = protoporphyrin IX + Fe(2+). The protein operates within porphyrin-containing compound metabolism; protoheme biosynthesis; protoheme from protoporphyrin-IX: step 1/1. Catalyzes the ferrous insertion into protoporphyrin IX. This is Ferrochelatase from Dechloromonas aromatica (strain RCB).